Consider the following 149-residue polypeptide: Transcriptional repressor NrdR (149 aa).

The segment at 3-34 (CPFCSENDTKVIDSRLVADGHQVRRRRQCLAC) is a zinc-finger region. The ATP-cone domain occupies 49 to 139 (PKVIKSNGNR…VYRSFEDIRE (91 aa)).

The protein belongs to the NrdR family. It depends on Zn(2+) as a cofactor.

Its function is as follows. Negatively regulates transcription of bacterial ribonucleotide reductase nrd genes and operons by binding to NrdR-boxes. In Vibrio atlanticus (strain LGP32) (Vibrio splendidus (strain Mel32)), this protein is Transcriptional repressor NrdR.